The primary structure comprises 62 residues: UPF0434 protein Avi_4243 (62 aa).

It belongs to the UPF0434 family.

The chain is UPF0434 protein Avi_4243 from Allorhizobium ampelinum (strain ATCC BAA-846 / DSM 112012 / S4) (Agrobacterium vitis (strain S4)).